Reading from the N-terminus, the 217-residue chain is Adenylate kinase (217 aa).

Position 10–15 (10–15) interacts with ATP; that stretch reads GAGKGT. The segment at 30 to 59 is NMP; sequence STGDIFRKNVADDTPLGRLAKQYMDAGDLV. Residues Thr31, Arg36, 57–59, 85–88, and Gln92 each bind AMP; these read DLV and GFPR. Positions 126–163 are LID; the sequence is GRRTCADCAHVWHVTYDPPTVDGVCDLCGGKLFQREDD. Residue Arg127 participates in ATP binding. Residues Cys130, Cys133, Cys150, and Cys153 each contribute to the Zn(2+) site. The AMP site is built by Arg160 and Arg171. Gly199 is a binding site for ATP.

The protein belongs to the adenylate kinase family. As to quaternary structure, monomer.

Its subcellular location is the cytoplasm. The enzyme catalyses AMP + ATP = 2 ADP. It participates in purine metabolism; AMP biosynthesis via salvage pathway; AMP from ADP: step 1/1. In terms of biological role, catalyzes the reversible transfer of the terminal phosphate group between ATP and AMP. Plays an important role in cellular energy homeostasis and in adenine nucleotide metabolism. The chain is Adenylate kinase from Acidothermus cellulolyticus (strain ATCC 43068 / DSM 8971 / 11B).